The sequence spans 213 residues: Kynurenine formamidase (213 aa).

Trp-15 contacts substrate. Positions 45, 49, and 51 each coordinate Zn(2+). Residue His-55 is the Proton donor/acceptor of the active site. His-157 and Glu-169 together coordinate Zn(2+).

The protein belongs to the Cyclase 1 superfamily. KynB family. Homodimer. Zn(2+) is required as a cofactor.

It carries out the reaction N-formyl-L-kynurenine + H2O = L-kynurenine + formate + H(+). The protein operates within amino-acid degradation; L-tryptophan degradation via kynurenine pathway; L-kynurenine from L-tryptophan: step 2/2. Functionally, catalyzes the hydrolysis of N-formyl-L-kynurenine to L-kynurenine, the second step in the kynurenine pathway of tryptophan degradation. The protein is Kynurenine formamidase of Deinococcus geothermalis (strain DSM 11300 / CIP 105573 / AG-3a).